A 485-amino-acid polypeptide reads, in one-letter code: Alpha,alpha-trehalose-phosphate synthase [UDP-forming] (485 aa).

Tyr-99 and Asp-153 together coordinate D-glucose 6-phosphate. Positions 290 and 295 each coordinate UDP. UDP-alpha-D-glucose is bound by residues Arg-290 and Lys-295. Arg-328 contributes to the D-glucose 6-phosphate binding site. UDP contacts are provided by residues Ile-367 and 393 to 397 (LVSYE). Residues Ile-367 and 389 to 397 (DGMNLVSYE) contribute to the UDP-alpha-D-glucose site.

The protein belongs to the glycosyltransferase 20 family.

The catalysed reaction is D-glucose 6-phosphate + UDP-alpha-D-glucose = alpha,alpha-trehalose 6-phosphate + UDP + H(+). The protein operates within carbohydrate biosynthesis. Synthase catalytic subunit of the trehalose synthase complex that catalyzes the production of trehalose from glucose-6-phosphate and UDP-alpha-D-glucose in a two step process. The chain is Alpha,alpha-trehalose-phosphate synthase [UDP-forming] from Zygosaccharomyces rouxii.